The primary structure comprises 265 residues: MIKWPWKVQESAHQTALPWQEALSIPLLTCLTEQEQSKLVTLAERFLQQKRLVPLQGFELNSLRSCRIALLFCLPVLELGLEWLDSFHEVLIYPAPFVVDDEWEDDIGLVHNQRIVQSGQSWQQGPIVLNWLDIQDSFDASGFNLIIHEVAHKLDTRNGDRASGVPFIPLREVAGWEHDLHAAMNNIQEEIELVGENAASIDAYAASDPAECFAVLSEYFFSAPELFAPRFPSLWQRFCQFYQQDPLQRLHHANDTDSFSATNVH.

His-111, His-148, His-152, and Glu-211 together coordinate Zn(2+).

This sequence belongs to the MtfA family. As to quaternary structure, interacts with Mlc. It depends on Zn(2+) as a cofactor.

The protein localises to the cytoplasm. In terms of biological role, involved in the modulation of the activity of the glucose-phosphotransferase system (glucose-PTS). Interacts with the transcriptional repressor Mlc, preventing its interaction with DNA and leading to the modulation of expression of genes regulated by Mlc, including ptsG, which encodes the PTS system glucose-specific EIICB component. Functionally, shows zinc-dependent metallopeptidase activity. The chain is Mlc titration factor A from Escherichia coli (strain UTI89 / UPEC).